Here is a 105-residue protein sequence, read N- to C-terminus: Thiosulfate sulfurtransferase GlpE (105 aa).

The region spanning 16-104 is the Rhodanese domain; sequence DKEDVVIADI…WEAAYSEKVE (89 aa). Catalysis depends on Cys64, which acts as the Cysteine persulfide intermediate.

This sequence belongs to the GlpE family.

It is found in the cytoplasm. It carries out the reaction thiosulfate + hydrogen cyanide = thiocyanate + sulfite + 2 H(+). It catalyses the reaction thiosulfate + [thioredoxin]-dithiol = [thioredoxin]-disulfide + hydrogen sulfide + sulfite + 2 H(+). Transferase that catalyzes the transfer of sulfur from thiosulfate to thiophilic acceptors such as cyanide or dithiols. May function in a CysM-independent thiosulfate assimilation pathway by catalyzing the conversion of thiosulfate to sulfite, which can then be used for L-cysteine biosynthesis. In Pseudoalteromonas translucida (strain TAC 125), this protein is Thiosulfate sulfurtransferase GlpE.